Consider the following 561-residue polypeptide: Reductase FVEG_12641 (561 aa).

The interval 1 to 26 (MGVQSTANLPKETVSHLDTAPTPKPG) is disordered. Residues 52–189 (QQHDGPVFCS…ICKGDTISLL (138 aa)) enclose the MOSC domain. The FAD-binding FR-type domain occupies 237–342 (SAPKTYTLVD…PGSNPGAMEN (106 aa)). FMN-binding positions include 288–289 (FE), 305–307 (GVS), 313–316 (RGGS), and threonine 362. The 2Fe-2S ferredoxin-type domain occupies 474-561 (FEVEVDEPDS…GIGRLRIEID (88 aa)). Position 512 (cysteine 512) interacts with [2Fe-2S] cluster. FMN is bound at residue serine 514. Residues cysteine 517, cysteine 520, and cysteine 548 each contribute to the [2Fe-2S] cluster site.

This sequence belongs to the PDR/VanB family. Monomer. The cofactor is FMN.

In terms of biological role, reductase; part of the Fusarium detoxification of benzoxazolinone cluster 2 (FDB2) involved in the degradation of benzoxazolinones produced by the host plant. Maize, wheat, and rye produce the 2 benzoxazinone phytoanticipins 2,4-dihy-droxy-7-methoxy-1,4-benzoxazin-3-one (DIMBOA) and 2,4-dihydroxy-1,4-benzoxazin-3-one (DIBOA) that, due to their inherent instability once released, spontaneously degrade to the more stable corresponding benzoxazolinones, 6-methoxy-2-benzoxazolinone (MBOA) and 2-benzoxazolinone (BOA), respectively. The first step in the detoxification of benzoxazolinones involves the hydrolysis of the cyclic ester bond of benzoxazolinones by the FDB1 cluster gamma-lactamase MBL1 to aminophenols. MBL1 is able to convert BOA into 2-aminophenol (2-AP), as well as MBOA into 5-methoxy-2-aminophenol (2-AMP). The FDB2 cluster N-malonyltransferase FDB2/NAT1 then metabolizes aminophenols via N-malonylation to non-toxic malonamic acids. FDB2/NAT1 converts 2-AP into N-(2-hydroxyphenyl) malonamic acid (HPMA) and 2-AMP into N-(2-hydroxy-4-methoxyphenyl) malonamic acid (HMPMA). The duplicated dienlactone hydrolases DLH1 and DLH2 may provide redundant function for hydrolyzing the lactone moiety in the BOA molecule. The roles of the amidases an other enzymes encoded by the 2 FDB clusters have not been identified so far. The protein is Reductase FVEG_12641 of Gibberella moniliformis (strain M3125 / FGSC 7600) (Maize ear and stalk rot fungus).